Here is a 20-residue protein sequence, read N- to C-terminus: Brevinin-1ITb (20 aa).

Methionine 8 carries the methionine sulfoxide; partial modification. A disulfide bridge links cysteine 14 with cysteine 20.

It belongs to the frog skin active peptide (FSAP) family. Brevinin subfamily. As to expression, expressed by the skin glands.

Its subcellular location is the secreted. Its function is as follows. Antimicrobial peptide. The protein is Brevinin-1ITb of Rana italica (Italian stream frog).